Reading from the N-terminus, the 77-residue chain is Sec-independent protein translocase protein TatA (77 aa).

A helical membrane pass occupies residues 1-21 (MGGISIWQLLIIALIVVLLFG). 2 stretches are compositionally biased toward basic and acidic residues: residues 47-56 (EKKALEDKEA) and 65-77 (TEKKPEADKKEQA). The interval 47–77 (EKKALEDKEAAAQTTQQATEKKPEADKKEQA) is disordered.

Belongs to the TatA/E family. In terms of assembly, the Tat system comprises two distinct complexes: a TatABC complex, containing multiple copies of TatA, TatB and TatC subunits, and a separate TatA complex, containing only TatA subunits. Substrates initially bind to the TatABC complex, which probably triggers association of the separate TatA complex to form the active translocon.

It is found in the cell inner membrane. Functionally, part of the twin-arginine translocation (Tat) system that transports large folded proteins containing a characteristic twin-arginine motif in their signal peptide across membranes. TatA could form the protein-conducting channel of the Tat system. The protein is Sec-independent protein translocase protein TatA of Shewanella amazonensis (strain ATCC BAA-1098 / SB2B).